Consider the following 160-residue polypeptide: Large ribosomal subunit protein eL21B (160 aa).

The interval 114–140 (AKRKEAKAQGKTVQLRRQPAPPATAHF) is disordered.

It belongs to the eukaryotic ribosomal protein eL21 family. Component of the large ribosomal subunit (LSU). Mature yeast ribosomes consist of a small (40S) and a large (60S) subunit. The 40S small subunit contains 1 molecule of ribosomal RNA (18S rRNA) and at least 33 different proteins. The large 60S subunit contains 3 rRNA molecules (25S, 5.8S and 5S rRNA) and at least 46 different proteins.

Its subcellular location is the cytoplasm. Its function is as follows. Component of the ribosome, a large ribonucleoprotein complex responsible for the synthesis of proteins in the cell. The small ribosomal subunit (SSU) binds messenger RNAs (mRNAs) and translates the encoded message by selecting cognate aminoacyl-transfer RNA (tRNA) molecules. The large subunit (LSU) contains the ribosomal catalytic site termed the peptidyl transferase center (PTC), which catalyzes the formation of peptide bonds, thereby polymerizing the amino acids delivered by tRNAs into a polypeptide chain. The nascent polypeptides leave the ribosome through a tunnel in the LSU and interact with protein factors that function in enzymatic processing, targeting, and the membrane insertion of nascent chains at the exit of the ribosomal tunnel. This Schizosaccharomyces pombe (strain 972 / ATCC 24843) (Fission yeast) protein is Large ribosomal subunit protein eL21B (rpl2102).